Consider the following 564-residue polypeptide: Membrane protein insertase YidC (564 aa).

The chain crosses the membrane as a helical span at residues 7–24 (VLWVVFSFSLLMLWDNYN). Residues 43–60 (KPAAATDDGKTAAAPTAD) are compositionally biased toward low complexity. The interval 43-76 (KPAAATDDGKTAAAPTADVPTSSAHAANATGVPD) is disordered. Transmembrane regions (helical) follow at residues 293–313 (LATNLYAVGAIMPMGAVAPGA), 341–361 (VKDYGWLTIIAKPIFWLMIQI), 364–384 (LLGNWGWTIVVLTIVIKLAFF), 438–458 (MPIVIQIPVFISLYWVLLASV), 483–503 (IGSFHLTIGILPILMAISMFI), and 524–544 (PIAFSLMFFFFPAGLVLYWVV).

It belongs to the OXA1/ALB3/YidC family. Type 1 subfamily. Interacts with the Sec translocase complex via SecD. Specifically interacts with transmembrane segments of nascent integral membrane proteins during membrane integration.

Its subcellular location is the cell inner membrane. Required for the insertion and/or proper folding and/or complex formation of integral membrane proteins into the membrane. Involved in integration of membrane proteins that insert both dependently and independently of the Sec translocase complex, as well as at least some lipoproteins. Aids folding of multispanning membrane proteins. This chain is Membrane protein insertase YidC, found in Janthinobacterium sp. (strain Marseille) (Minibacterium massiliensis).